A 98-amino-acid polypeptide reads, in one-letter code: Plastocyanin (98 aa).

In terms of domain architecture, Plastocyanin-like spans 1 to 98 (AQIVKLGGDD…AGMKMTITVQ (98 aa)). Cu cation contacts are provided by His38, Cys83, His86, and Met91.

Belongs to the plastocyanin family. Requires Cu(2+) as cofactor.

It is found in the plastid. Its subcellular location is the chloroplast thylakoid membrane. In terms of biological role, participates in electron transfer between P700 and the cytochrome b6-f complex in photosystem I. This Ulva arasakii (Sea lettuce) protein is Plastocyanin (PETE).